The sequence spans 500 residues: Alpha-L-arabinofuranosidase (500 aa).

An N-terminal signal peptide occupies residues 1-21 (MLSNARIIAAGCIAAGSLVAA). N467 carries an N-linked (GlcNAc...) asparagine glycan.

It belongs to the glycosyl hydrolase 54 family.

The catalysed reaction is Hydrolysis of terminal non-reducing alpha-L-arabinofuranoside residues in alpha-L-arabinosides.. Its pathway is glycan metabolism; L-arabinan degradation. The polypeptide is Alpha-L-arabinofuranosidase (abf1) (Hypocrea jecorina (Trichoderma reesei)).